Here is a 688-residue protein sequence, read N- to C-terminus: PTS system glucoside-specific EIICBA component (688 aa).

Residues 3–427 (KKLFGQLQRI…FKLKTPGRED (425 aa)) enclose the PTS EIIC type-1 domain. Transmembrane regions (helical) follow at residues 12 to 32 (IGKA…LLAF), 81 to 101 (LGLA…YLIM), 137 to 157 (LVLG…MGAL), 182 to 202 (FVPI…SFAW), 223 to 243 (LTTF…LHHI), 284 to 304 (AFTT…AFAI), 315 to 335 (VVGG…ITEP), 340 to 360 (FLFV…TSFL), 364 to 384 (LLGV…ILYG), and 395 to 415 (LVIP…DFAI). The PTS EIIB type-1 domain occupies 438–519 (AKLPFDVLDA…AKIMSGEITK (82 aa)). Cys460 acts as the Phosphocysteine intermediate; for EIIB activity in catalysis. In terms of domain architecture, PTS EIIA type-1 spans 560–664 (DQVFAGKMMG…SIVTPMIITN (105 aa)). His612 (tele-phosphohistidine intermediate; for EIIA activity) is an active-site residue.

It is found in the cell membrane. Its function is as follows. The phosphoenolpyruvate-dependent sugar phosphotransferase system (sugar PTS), a major carbohydrate active -transport system, catalyzes the phosphorylation of incoming sugar substrates concomitantly with their translocation across the cell membrane. This system is involved in alpha- and beta-glucoside transport. In Staphylococcus aureus (strain USA300), this protein is PTS system glucoside-specific EIICBA component (glcB).